Here is a 51-residue protein sequence, read N- to C-terminus: MSSHKTFKIKQFLAKKQKQNRPIPQWIRMKTGNKIRYNSKRRHWKRTKLGL.

It belongs to the eukaryotic ribosomal protein eL39 family.

The polypeptide is Putative ribosomal protein eL39-like 5 (RPL39P5) (Homo sapiens (Human)).